The chain runs to 134 residues: Probable glycine cleavage system H protein (134 aa).

In terms of domain architecture, Lipoyl-binding spans Thr29–Lys110. The residue at position 70 (Lys70) is an N6-lipoyllysine.

It belongs to the GcvH family. In terms of assembly, the glycine cleavage system is composed of four proteins: P, T, L and H. It depends on (R)-lipoate as a cofactor.

The glycine cleavage system catalyzes the degradation of glycine. The H protein shuttles the methylamine group of glycine from the P protein to the T protein. In Thermococcus gammatolerans (strain DSM 15229 / JCM 11827 / EJ3), this protein is Probable glycine cleavage system H protein.